We begin with the raw amino-acid sequence, 291 residues long: Transmembrane protein 41B (291 aa).

Positions 1-11 are enriched in basic and acidic residues; the sequence is MAKGRVADRSP. Residues 1-43 form a disordered region; sequence MAKGRVADRSPTEMLHSTPAGDRAVRTQGSAAPGSKDHLNEKP. Position 18 is a phosphothreonine (threonine 18). Residue serine 35 is modified to Phosphoserine. 6 helical membrane passes run 52–72, 109–129, 147–169, 197–217, 225–245, and 262–282; these read TSLL…FLVY, FYVQ…TFAI, LALF…LSYL, LINY…FINI, PLKV…FVAI, and SWSS…PAIF. Residues 140–251 form a VTT domain; required for its function in autophagy region; it reads GFLYPFPLAL…FVAIKAGTTL (112 aa).

It belongs to the TMEM41 family. As to quaternary structure, interacts with VMP1. Interacts with COPA, COPB1, VDAC1 and ERLIN2. Interacts with ATG2A. Interacts with SURF4. Expressed in brain, spinal cord, kidney and first lumbar dorsal root ganglia during postnatal development. Expressed in motor neurons and proprioceptive neurons.

The protein resides in the endoplasmic reticulum membrane. It localises to the endomembrane system. The catalysed reaction is a 1,2-diacyl-sn-glycero-3-phospho-L-serine(in) = a 1,2-diacyl-sn-glycero-3-phospho-L-serine(out). The enzyme catalyses cholesterol(in) = cholesterol(out). It catalyses the reaction a 1,2-diacyl-sn-glycero-3-phosphocholine(in) = a 1,2-diacyl-sn-glycero-3-phosphocholine(out). It carries out the reaction a 1,2-diacyl-sn-glycero-3-phosphoethanolamine(in) = a 1,2-diacyl-sn-glycero-3-phosphoethanolamine(out). In terms of biological role, phospholipid scramblase involved in lipid homeostasis and membrane dynamics processes. Has phospholipid scramblase activity toward cholesterol and phosphatidylserine, as well as phosphatidylethanolamine and phosphatidylcholine. Required for autophagosome formation: participates in early stages of autophagosome biogenesis at the endoplasmic reticulum (ER) membrane by reequilibrating the leaflets of the ER as lipids are extracted by ATG2 (ATG2A or ATG2B) to mediate autophagosome assembly. In addition to autophagy, involved in other processes in which phospholipid scramblase activity is required. Required for normal motor neuron development. This is Transmembrane protein 41B from Mus musculus (Mouse).